The following is a 450-amino-acid chain: Ornithine decarboxylase (450 aa).

K59 is subject to N6-(pyridoxal phosphate)lysine. Pyridoxal 5'-phosphate is bound by residues S190, G227, and E264 to R267. S293 is subject to Phosphoserine; by CK2. Y321–D322 serves as a coordination point for substrate. The active-site Proton donor; shared with dimeric partner is C350. Position 351 (D351) interacts with substrate. Y379 is a binding site for pyridoxal 5'-phosphate.

Belongs to the Orn/Lys/Arg decarboxylase class-II family. Homodimer. Only the dimer is catalytically active, as the active sites are constructed of residues from both monomers. Pyridoxal 5'-phosphate is required as a cofactor.

It catalyses the reaction L-ornithine + H(+) = putrescine + CO2. Its pathway is amine and polyamine biosynthesis; putrescine biosynthesis via L-ornithine pathway; putrescine from L-ornithine: step 1/1. Its activity is regulated as follows. Inhibited by antizymes (AZs) in response to polyamine levels. AZs inhibit the assembly of the functional homodimer by binding to ODC monomers and targeting them for ubiquitin-independent proteolytic destruction by the 26S proteasome. Its function is as follows. Catalyzes the first and rate-limiting step of polyamine biosynthesis that converts ornithine into putrescine, which is the precursor for the polyamines, spermidine and spermine. Polyamines are essential for cell proliferation and are implicated in cellular processes, ranging from DNA replication to apoptosis. The chain is Ornithine decarboxylase (ODC1) from Gallus gallus (Chicken).